The following is a 470-amino-acid chain: MAQMQIDPEAGRRIHGKPEPRVHIETFGCQMNEHDSEIMYGILAQMGYVKAQGPDDADLLLFNTCAVRESAVEHAFGRIGQLKPLKYTNPDLIIGVCGCVPQVEGQVERIKRMFPYLDLIFGTHNIHRLPELVERARSERETVVDVWESMGDDFPDILPAAREGDLKAWVTIMYGCDKHCTYCIVPTTRGKERSRPYEVILAEVQELARQGFKEITLLGQNVNAYGKDLYGRHGEGAFDFGDLIELIDRNSPGIERIRFTTNHPKDFTRKMVEQIARAEKVCEWFHLPVQSGSDSVLRRMKRSYNRKQYLRLVGWIRELIPDAVITTDIIVGFPGETEEEFQETLSLVEEVQYDAAFMFMYSERAGTPAAQMEDRLSVPEKKERLQRLMEVQNRIARAKNEARVGKVYDILVEGLDKGKPDVVFGWTRGNILVTFPGDESLRGRIVPVRITRAGTWTLEGELVESPVTLA.

Positions 20 to 138 constitute an MTTase N-terminal domain; that stretch reads PRVHIETFGC…LPELVERARS (119 aa). Residues cysteine 29, cysteine 65, cysteine 99, cysteine 176, cysteine 180, and cysteine 183 each contribute to the [4Fe-4S] cluster site. The Radical SAM core domain occupies 162–398; it reads REGDLKAWVT…MEVQNRIARA (237 aa). Residues 401–464 form the TRAM domain; that stretch reads EARVGKVYDI…TWTLEGELVE (64 aa).

The protein belongs to the methylthiotransferase family. MiaB subfamily. Monomer. [4Fe-4S] cluster serves as cofactor.

The protein resides in the cytoplasm. It catalyses the reaction N(6)-dimethylallyladenosine(37) in tRNA + (sulfur carrier)-SH + AH2 + 2 S-adenosyl-L-methionine = 2-methylsulfanyl-N(6)-dimethylallyladenosine(37) in tRNA + (sulfur carrier)-H + 5'-deoxyadenosine + L-methionine + A + S-adenosyl-L-homocysteine + 2 H(+). Catalyzes the methylthiolation of N6-(dimethylallyl)adenosine (i(6)A), leading to the formation of 2-methylthio-N6-(dimethylallyl)adenosine (ms(2)i(6)A) at position 37 in tRNAs that read codons beginning with uridine. In Symbiobacterium thermophilum (strain DSM 24528 / JCM 14929 / IAM 14863 / T), this protein is tRNA-2-methylthio-N(6)-dimethylallyladenosine synthase.